A 249-amino-acid chain; its full sequence is 1-(5-phosphoribosyl)-5-[(5-phosphoribosylamino)methylideneamino] imidazole-4-carboxamide isomerase (249 aa).

Residue aspartate 10 is the Proton acceptor of the active site. Aspartate 136 (proton donor) is an active-site residue.

It belongs to the HisA/HisF family.

It localises to the cytoplasm. The enzyme catalyses 1-(5-phospho-beta-D-ribosyl)-5-[(5-phospho-beta-D-ribosylamino)methylideneamino]imidazole-4-carboxamide = 5-[(5-phospho-1-deoxy-D-ribulos-1-ylimino)methylamino]-1-(5-phospho-beta-D-ribosyl)imidazole-4-carboxamide. Its pathway is amino-acid biosynthesis; L-histidine biosynthesis; L-histidine from 5-phospho-alpha-D-ribose 1-diphosphate: step 4/9. The polypeptide is 1-(5-phosphoribosyl)-5-[(5-phosphoribosylamino)methylideneamino] imidazole-4-carboxamide isomerase (Symbiobacterium thermophilum (strain DSM 24528 / JCM 14929 / IAM 14863 / T)).